A 50-amino-acid chain; its full sequence is Small ribosomal subunit protein uS14 (50 aa).

Zn(2+) contacts are provided by C15, C18, C33, and C36.

Belongs to the universal ribosomal protein uS14 family. Zinc-binding uS14 subfamily. As to quaternary structure, part of the 30S ribosomal subunit. Zn(2+) serves as cofactor.

Its function is as follows. Binds 16S rRNA, required for the assembly of 30S particles. In Methanosarcina barkeri (strain Fusaro / DSM 804), this protein is Small ribosomal subunit protein uS14.